The following is a 460-amino-acid chain: Cysteine--tRNA ligase (460 aa).

Residue Cys28 participates in Zn(2+) binding. The 'HIGH' region signature appears at 30–40 (MTVYDYCHLGH). The Zn(2+) site is built by Cys209, His234, and Glu238. Positions 266-270 (KMSKS) match the 'KMSKS' region motif. Residue Lys269 coordinates ATP.

Belongs to the class-I aminoacyl-tRNA synthetase family. Monomer. Zn(2+) serves as cofactor.

It is found in the cytoplasm. It catalyses the reaction tRNA(Cys) + L-cysteine + ATP = L-cysteinyl-tRNA(Cys) + AMP + diphosphate. The sequence is that of Cysteine--tRNA ligase from Pseudomonas fluorescens (strain ATCC BAA-477 / NRRL B-23932 / Pf-5).